A 656-amino-acid polypeptide reads, in one-letter code: Probable serine/threonine-protein kinase sky1 (656 aa).

The interval 1 to 127 is disordered; the sequence is MSDIQQDSTS…KQGGYHPVRR (127 aa). The span at 16 to 48 shows a compositional bias: gly residues; it reads TSLGGTSLGGTSLGGTSLGGTSLGGTSLGGTSL. 2 stretches are compositionally biased toward low complexity: residues 49–64 and 72–89; these read GGSTTTSTTTPKSTNS and TSSNNNNNNNNNNNNNNE. Residues 96-108 are compositionally biased toward polar residues; it reads AGSSNKSFMPLNN. Residues 135 to 648 form the Protein kinase domain; the sequence is YQVVDKLGWG…AKDCLNHTWL (514 aa). Residue 141-149 participates in ATP binding; it reads LGWGHFSTV. The tract at residues 157–185 is disordered; that stretch reads TPITTSSSSSSTTTTTTSSSSNGNGNGNG. The span at 160 to 179 shows a compositional bias: low complexity; the sequence is TTSSSSSSTTTTTTSSSSNG. Lys197 lines the ATP pocket. Residue Asp298 is the Proton acceptor of the active site. The disordered stretch occupies residues 330-454; the sequence is RTSSSNKQSQ…TTATATATTT (125 aa). The segment covering 332–355 has biased composition (low complexity); that stretch reads SSSNKQSQQQQQPQQQQSQQNIND. Basic and acidic residues-rich tracts occupy residues 383–401 and 413–440; these read SNRDRDNNKNKNIKKDDNK and ENTDNKDLNSSEENKKEEEQQQNKKEEP. Over residues 441–454 the composition is skewed to low complexity; sequence TTTTTTATATATTT.

It belongs to the protein kinase superfamily. CMGC Ser/Thr protein kinase family.

The enzyme catalyses L-seryl-[protein] + ATP = O-phospho-L-seryl-[protein] + ADP + H(+). The catalysed reaction is L-threonyl-[protein] + ATP = O-phospho-L-threonyl-[protein] + ADP + H(+). The chain is Probable serine/threonine-protein kinase sky1 (sky1) from Dictyostelium discoideum (Social amoeba).